Consider the following 350-residue polypeptide: ATP-dependent (S)-NAD(P)H-hydrate dehydratase (350 aa).

In terms of domain architecture, YjeF C-terminal spans leucine 35–leucine 342. (6S)-NADPHX-binding positions include glycine 139 and asparagine 192–arginine 198. ATP is bound by residues lysine 230–aspartate 234 and glycine 249–glycine 258. Aspartate 259 lines the (6S)-NADPHX pocket.

This sequence belongs to the NnrD/CARKD family. It depends on Mg(2+) as a cofactor.

The protein resides in the cytoplasm. It catalyses the reaction (6S)-NADHX + ATP = ADP + phosphate + NADH + H(+). It carries out the reaction (6S)-NADPHX + ATP = ADP + phosphate + NADPH + H(+). In terms of biological role, catalyzes the dehydration of the S-form of NAD(P)HX at the expense of ATP, which is converted to ADP. Together with NAD(P)HX epimerase, which catalyzes the epimerization of the S- and R-forms, the enzyme allows the repair of both epimers of NAD(P)HX, a damaged form of NAD(P)H that is a result of enzymatic or heat-dependent hydration. This chain is ATP-dependent (S)-NAD(P)H-hydrate dehydratase, found in Mycosarcoma maydis (Corn smut fungus).